The sequence spans 99 residues: Co-chaperonin GroES (99 aa).

Belongs to the GroES chaperonin family. In terms of assembly, heptamer of 7 subunits arranged in a ring. Interacts with the chaperonin GroEL.

It is found in the cytoplasm. Functionally, together with the chaperonin GroEL, plays an essential role in assisting protein folding. The GroEL-GroES system forms a nano-cage that allows encapsulation of the non-native substrate proteins and provides a physical environment optimized to promote and accelerate protein folding. GroES binds to the apical surface of the GroEL ring, thereby capping the opening of the GroEL channel. This is Co-chaperonin GroES from Corynebacterium glutamicum (strain R).